We begin with the raw amino-acid sequence, 490 residues long: Bifunctional pantoate ligase/cytidylate kinase (490 aa).

ATP is bound at residue 1 to 8 (MGGLHQGH). The segment at 1-253 (MGGLHQGHAR…CGETRLIDHV (253 aa)) is pantoate--beta-alanine ligase. The active-site Proton donor is the H8. Q35 contacts (R)-pantoate. Q35 provides a ligand contact to beta-alanine. ATP is bound at residue 124–127 (GEKD). Q130 lines the (R)-pantoate pocket. ATP contacts are provided by residues V153 and 161 to 164 (ASSR). Residues 254–490 (FIMTRSPIVA…AKEIWPTPQG (237 aa)) form a cytidylate kinase region.

The protein in the N-terminal section; belongs to the pantothenate synthetase family. This sequence in the C-terminal section; belongs to the cytidylate kinase family. Type 1 subfamily.

It localises to the cytoplasm. The catalysed reaction is (R)-pantoate + beta-alanine + ATP = (R)-pantothenate + AMP + diphosphate + H(+). It catalyses the reaction CMP + ATP = CDP + ADP. The enzyme catalyses dCMP + ATP = dCDP + ADP. Its pathway is cofactor biosynthesis; (R)-pantothenate biosynthesis; (R)-pantothenate from (R)-pantoate and beta-alanine: step 1/1. Functionally, catalyzes the condensation of pantoate with beta-alanine in an ATP-dependent reaction via a pantoyl-adenylate intermediate. In terms of biological role, catalyzes the transfer of a phosphate group from ATP to either CMP or dCMP to form CDP or dCDP and ADP, respectively. The protein is Bifunctional pantoate ligase/cytidylate kinase of Synechococcus sp. (strain WH7803).